We begin with the raw amino-acid sequence, 74 residues long: Heat shock factor-binding protein 1-like protein 1 (74 aa).

A coiled-coil region spans residues 12–65; that stretch reads RALRDAAENLFQELQEHFQALTATLNLRMEEMGNRIEDLQKNVKDLMVQAGIEN.

It belongs to the HSBP1 family.

In Homo sapiens (Human), this protein is Heat shock factor-binding protein 1-like protein 1 (HSBP1L1).